A 64-amino-acid chain; its full sequence is Large ribosomal subunit protein bL32 (64 aa).

The protein belongs to the bacterial ribosomal protein bL32 family.

This is Large ribosomal subunit protein bL32 from Mycoplasma mobile (strain ATCC 43663 / 163K / NCTC 11711) (Mesomycoplasma mobile).